A 488-amino-acid polypeptide reads, in one-letter code: MVIWFFYGFRKIMHLSLKRIIVKCKMSQLDRTSLIQYFNSNGVLISPEALDKLIKYSSSSLIEDLIKNSDGYIDEKYVERYVSRPKVRNDYEVYLPDVRFNASIEDFRKMFVSKYEKLSKIITSSSSMRGSISIKTAKRSQGEVKVVGMVSEVSMTKNGHKRIVIEDLDDSITAIVMKDRGPVNEIILEDEVIGIIGSVSQSSKDPVIFVNEIIRPDIPYRVIDEEKHEPVYVASISDIHVGSKTFRKNEFEAMVRWISGSDPDASRVKYLILSGDVVDGIGVYPDQENDLEILNPLEQYANLAEYLVDVPEDVKVFVMPGNHDTVRLSEPQPVFPGKIRDLFEPNVAFLPNPYNLKLEGKNVLVYHGMSLNDMIELIPGANYDSIGKAIEAILVRRHLSPKYGGNTPMIPSAVDYHVIEEVPDIFITGHIHSHYIGNYKGVRYVNSSTWQSQTEYQKMMNFNPKPSKLTLFDLYSRSVIVKDFDTTL.

Belongs to the DNA polymerase delta/II small subunit family. Heterodimer of a large subunit and a small subunit.

The catalysed reaction is DNA(n) + a 2'-deoxyribonucleoside 5'-triphosphate = DNA(n+1) + diphosphate. It carries out the reaction Exonucleolytic cleavage in the 3'- to 5'-direction to yield nucleoside 5'-phosphates.. Functionally, possesses two activities: a DNA synthesis (polymerase) and an exonucleolytic activity that degrades single-stranded DNA in the 3' to 5' direction. Has a template-primer preference which is characteristic of a replicative DNA polymerase. The sequence is that of DNA polymerase II small subunit (polB) from Thermoplasma acidophilum (strain ATCC 25905 / DSM 1728 / JCM 9062 / NBRC 15155 / AMRC-C165).